A 188-amino-acid polypeptide reads, in one-letter code: Adenylate kinase (188 aa).

Position 11–16 (11–16 (GAGKGT)) interacts with ATP. The NMP stretch occupies residues 31-60 (STGDIFRANIKDQTELGREAQRYTDAGNLV). AMP contacts are provided by residues T32, R37, 58 to 60 (NLV), 86 to 89 (GYPR), and Q93. Positions 127–137 (GRAQEQGRTDD) are LID. R128 serves as a coordination point for ATP. R134 and R145 together coordinate AMP. ATP is bound at residue G173.

It belongs to the adenylate kinase family. In terms of assembly, monomer.

Its subcellular location is the cytoplasm. The catalysed reaction is AMP + ATP = 2 ADP. It functions in the pathway purine metabolism; AMP biosynthesis via salvage pathway; AMP from ADP: step 1/1. Functionally, catalyzes the reversible transfer of the terminal phosphate group between ATP and AMP. Plays an important role in cellular energy homeostasis and in adenine nucleotide metabolism. In Kocuria rhizophila (strain ATCC 9341 / DSM 348 / NBRC 103217 / DC2201), this protein is Adenylate kinase.